A 67-amino-acid chain; its full sequence is uncharacterized protein (67 aa).

This is an uncharacterized protein from Vaccinia virus (strain Copenhagen) (VACV).